A 3421-amino-acid polypeptide reads, in one-letter code: Large tegument protein deneddylase (3421 aa).

A deubiquitination activity region spans residues 1–248 (MAQTLVPANK…SETYLSDEQY (248 aa)). One can recognise a Peptidase C76 domain in the interval 19–238 (VVIGYRNQYD…ISATSLLYGI (220 aa)). Catalysis depends on residues C39, D172, and H174. Residues 311 to 351 (QPTEKRVSLPKRRRPPWTPPTSSENLTTSGNTHTVAGRPSQ) are disordered. The span at 332 to 344 (SSENLTTSGNTHT) shows a compositional bias: polar residues. Positions 482-508 (LEQFITMIFNRLLSFLVENGARTRTDS) are interaction with inner tegument protein. Disordered stretches follow at residues 2407-2442 (ESNP…PTGI) and 2479-3195 (SNAM…RKNI). Over residues 2415 to 2432 (SHDSSQSLDVPSSPSSGS) the composition is skewed to low complexity. Composition is skewed to pro residues over residues 2506-2516 (TLPPKAAPLPP), 2541-2556 (PSVP…PPLP), 2565-2577 (GPPP…PPLP), 2586-2598 (GPPP…PPLP), and 2607-2619 (GPPP…PPLP). Polar residues-rich tracts occupy residues 2620-2637 (QSTS…SGKT) and 2778-2787 (SDSNVTQSTK). The segment covering 2797–2857 (PAAAPAKSAA…SAAAPAAAPA (61 aa)) has biased composition (low complexity). The span at 2869–2895 (KPAKDQAKDQAKDQAKDQAKDQAKDQA) shows a compositional bias: basic and acidic residues. The span at 2953 to 2969 (LSASKNSHTTDAVSSDR) shows a compositional bias: polar residues. Basic and acidic residues-rich tracts occupy residues 3023–3040 (RKSD…RRAF) and 3088–3097 (CSEEPKRPTG). Positions 3120-3146 (IPQNQNTSESPRTTSLKSPTRTVQSSM) are enriched in polar residues. Pro residues predominate over residues 3171-3188 (PQPPPANQTPPPQEPPAP).

The protein belongs to the herpesviridae large tegument protein family. In terms of assembly, interacts with host CUL1 and CUL4A; these interactions inhibit the E3 ligase activity of cullins. Interacts with inner tegument protein. Interacts with capsid vertex specific component CVC2. Interacts with the major capsid protein/MCP.

Its subcellular location is the virion tegument. The protein resides in the host cytoplasm. It is found in the host nucleus. The catalysed reaction is Thiol-dependent hydrolysis of ester, thioester, amide, peptide and isopeptide bonds formed by the C-terminal Gly of ubiquitin (a 76-residue protein attached to proteins as an intracellular targeting signal).. In terms of biological role, large tegument protein that plays multiple roles in the viral cycle. During viral entry, remains associated with the capsid while most of the tegument is detached and participates in the capsid transport toward the host nucleus. Plays a role in the routing of the capsid at the nuclear pore complex and subsequent uncoating. Within the host nucleus, acts as a deneddylase and promotes the degradation of nuclear CRLs (cullin-RING ubiquitin ligases) and thereby stabilizes nuclear CRL substrates, while cytoplasmic CRLs remain unaffected. These modifications prevent host cell cycle S-phase progression and create a favorable environment allowing efficient viral genome replication. Participates later in the secondary envelopment of capsids. Indeed, plays a linker role for the association of the outer viral tegument to the capsids together with the inner tegument protein. In Equus caballus (Horse), this protein is Large tegument protein deneddylase.